A 285-amino-acid chain; its full sequence is Nucleotide-binding protein Pfl01_0854 (285 aa).

ATP is bound at residue 8 to 15 (GRSGSGKS). A GTP-binding site is contributed by 60–63 (DARN).

It belongs to the RapZ-like family.

Displays ATPase and GTPase activities. The protein is Nucleotide-binding protein Pfl01_0854 of Pseudomonas fluorescens (strain Pf0-1).